A 205-amino-acid polypeptide reads, in one-letter code: Small ribosomal subunit protein uS4c (205 aa).

One can recognise an S4 RNA-binding domain in the interval 93–156 (MRLDNTVFRL…KSRNLVLNNL (64 aa)).

Belongs to the universal ribosomal protein uS4 family. Part of the 30S ribosomal subunit. Contacts protein S5. The interaction surface between S4 and S5 is involved in control of translational fidelity.

It localises to the plastid. It is found in the chloroplast. Functionally, one of the primary rRNA binding proteins, it binds directly to 16S rRNA where it nucleates assembly of the body of the 30S subunit. With S5 and S12 plays an important role in translational accuracy. The chain is Small ribosomal subunit protein uS4c (rps4) from Mesostigma viride (Green alga).